The chain runs to 184 residues: Shikimate kinase (184 aa).

Residue 18-23 (GAGKTT) coordinates ATP. Thr22 is a Mg(2+) binding site. Positions 40, 64, and 86 each coordinate substrate. Residue Arg124 participates in ATP binding. Residue Arg143 coordinates substrate. Gln160 is a binding site for ATP.

The protein belongs to the shikimate kinase family. As to quaternary structure, monomer. Requires Mg(2+) as cofactor.

The protein resides in the cytoplasm. It carries out the reaction shikimate + ATP = 3-phosphoshikimate + ADP + H(+). The protein operates within metabolic intermediate biosynthesis; chorismate biosynthesis; chorismate from D-erythrose 4-phosphate and phosphoenolpyruvate: step 5/7. Functionally, catalyzes the specific phosphorylation of the 3-hydroxyl group of shikimic acid using ATP as a cosubstrate. The sequence is that of Shikimate kinase from Chromobacterium violaceum (strain ATCC 12472 / DSM 30191 / JCM 1249 / CCUG 213 / NBRC 12614 / NCIMB 9131 / NCTC 9757 / MK).